The sequence spans 607 residues: UvrABC system protein C (607 aa).

One can recognise a GIY-YIG domain in the interval 16-94; that stretch reads GRPGVYRMFD…IKEWRPPYNI (79 aa). One can recognise a UVR domain in the interval 203–238; that stretch reads QQLGNELNAEMEKAAMALDFEKAAELRDQIALLRRV.

This sequence belongs to the UvrC family. As to quaternary structure, interacts with UvrB in an incision complex.

Its subcellular location is the cytoplasm. Functionally, the UvrABC repair system catalyzes the recognition and processing of DNA lesions. UvrC both incises the 5' and 3' sides of the lesion. The N-terminal half is responsible for the 3' incision and the C-terminal half is responsible for the 5' incision. This is UvrABC system protein C from Pseudomonas putida (strain ATCC 47054 / DSM 6125 / CFBP 8728 / NCIMB 11950 / KT2440).